The chain runs to 156 residues: Phosphopantetheine adenylyltransferase (156 aa).

It belongs to the eukaryotic CoaD family.

It localises to the cytoplasm. The catalysed reaction is (R)-4'-phosphopantetheine + ATP + H(+) = 3'-dephospho-CoA + diphosphate. Its pathway is cofactor biosynthesis; coenzyme A biosynthesis. Functionally, reversibly transfers an adenylyl group from ATP to 4'-phosphopantetheine, yielding dephospho-CoA (dPCoA) and pyrophosphate. This chain is Phosphopantetheine adenylyltransferase, found in Methanosarcina acetivorans (strain ATCC 35395 / DSM 2834 / JCM 12185 / C2A).